We begin with the raw amino-acid sequence, 1203 residues long: DNA-directed RNA polymerase subunit beta' (1203 aa).

Zn(2+)-binding residues include C60, C62, C75, and C78. Residues D449, D451, and D453 each coordinate Mg(2+). Zn(2+)-binding residues include C818, C892, C899, and C902.

It belongs to the RNA polymerase beta' chain family. In terms of assembly, the RNAP catalytic core consists of 2 alpha, 1 beta, 1 beta' and 1 omega subunit. When a sigma factor is associated with the core the holoenzyme is formed, which can initiate transcription. The cofactor is Mg(2+). It depends on Zn(2+) as a cofactor.

The catalysed reaction is RNA(n) + a ribonucleoside 5'-triphosphate = RNA(n+1) + diphosphate. DNA-dependent RNA polymerase catalyzes the transcription of DNA into RNA using the four ribonucleoside triphosphates as substrates. The chain is DNA-directed RNA polymerase subunit beta' from Bacillus cereus (strain ATCC 14579 / DSM 31 / CCUG 7414 / JCM 2152 / NBRC 15305 / NCIMB 9373 / NCTC 2599 / NRRL B-3711).